The primary structure comprises 177 residues: Large ribosomal subunit protein uL10 (177 aa).

It belongs to the universal ribosomal protein uL10 family. In terms of assembly, part of the ribosomal stalk of the 50S ribosomal subunit. The N-terminus interacts with L11 and the large rRNA to form the base of the stalk. The C-terminus forms an elongated spine to which L12 dimers bind in a sequential fashion forming a multimeric L10(L12)X complex.

Forms part of the ribosomal stalk, playing a central role in the interaction of the ribosome with GTP-bound translation factors. The polypeptide is Large ribosomal subunit protein uL10 (Thermoanaerobacter pseudethanolicus (strain ATCC 33223 / 39E) (Clostridium thermohydrosulfuricum)).